Here is a 157-residue protein sequence, read N- to C-terminus: 2-C-methyl-D-erythritol 2,4-cyclodiphosphate synthase (157 aa).

Positions 8 and 10 each coordinate a divalent metal cation. Residues 8 to 10 and 34 to 35 contribute to the 4-CDP-2-C-methyl-D-erythritol 2-phosphate site; these read DVH and HS. Residue histidine 42 coordinates a divalent metal cation. 4-CDP-2-C-methyl-D-erythritol 2-phosphate-binding positions include 56–58, 61–65, 100–106, 132–135, and phenylalanine 139; these read DIG, FPDTD, AQRPKMA, and TTEE.

It belongs to the IspF family. In terms of assembly, homotrimer. It depends on a divalent metal cation as a cofactor.

It catalyses the reaction 4-CDP-2-C-methyl-D-erythritol 2-phosphate = 2-C-methyl-D-erythritol 2,4-cyclic diphosphate + CMP. It participates in isoprenoid biosynthesis; isopentenyl diphosphate biosynthesis via DXP pathway; isopentenyl diphosphate from 1-deoxy-D-xylulose 5-phosphate: step 4/6. In terms of biological role, involved in the biosynthesis of isopentenyl diphosphate (IPP) and dimethylallyl diphosphate (DMAPP), two major building blocks of isoprenoid compounds. Catalyzes the conversion of 4-diphosphocytidyl-2-C-methyl-D-erythritol 2-phosphate (CDP-ME2P) to 2-C-methyl-D-erythritol 2,4-cyclodiphosphate (ME-CPP) with a corresponding release of cytidine 5-monophosphate (CMP). This chain is 2-C-methyl-D-erythritol 2,4-cyclodiphosphate synthase, found in Trichlorobacter lovleyi (strain ATCC BAA-1151 / DSM 17278 / SZ) (Geobacter lovleyi).